The sequence spans 231 residues: S-norcoclaurine synthase 1 (231 aa).

Position 107–109 (107–109 (YKE)) interacts with dopamine. Lys-121 acts as the Proton donor in catalysis. Asp-140 lines the (4-hydroxyphenyl)acetaldehyde pocket. A helical transmembrane segment spans residues 210 to 230 (LLLCLIICLVIAGGMFVAGVP).

It belongs to the BetVI family. In terms of tissue distribution, detected in roots, stems, leaves, flower buds and germinating seeds.

Its subcellular location is the membrane. The enzyme catalyses (4-hydroxyphenyl)acetaldehyde + dopamine = (S)-norcoclaurine + H2O. It functions in the pathway alkaloid biosynthesis; (S)-reticuline biosynthesis. Activity doubles within 5 hours of elicitor treatment and continues to increase for at least 80 hours. In terms of biological role, involved in the biosynthesis of (S)-coclaurine, the common precursor of all benzylisoquinoline alkaloids such as morphine, sanguinarine, codeine or papaverine. Condenses dopamine and 4-hydroxyphenylacetaldehyde. In Papaver somniferum (Opium poppy), this protein is S-norcoclaurine synthase 1.